The sequence spans 464 residues: Mitogen-activated protein kinase 10 (464 aa).

Positions 64–359 (YQNLKPIGSG…VDDALQHPYI (296 aa)) constitute a Protein kinase domain. ATP-binding positions include 70–78 (IGSGAQGIV) and Lys-93. Asp-189 serves as the catalytic Proton acceptor. Thr-221 is subject to Phosphothreonine; by MAP2K7. Positions 221–223 (TPY) match the TXY motif. Tyr-223 is modified (phosphotyrosine; by MAP2K4). The segment at 405–464 (TKNGVVKGQPSPSGAAVNSSESLPPSSSVNDISSMSTDQTLASDTDSSLEASAGPLGCCR) is disordered. Positions 423–432 (SSESLPPSSS) are enriched in low complexity. Polar residues predominate over residues 433–454 (VNDISSMSTDQTLASDTDSSLE). Residues Cys-462 and Cys-463 are each lipidated (S-palmitoyl cysteine).

Belongs to the protein kinase superfamily. CMGC Ser/Thr protein kinase family. MAP kinase subfamily. In terms of assembly, interacts with MAPKBP1. Interacts with MAPK8IP1/JIP-1 and MAPK8IP3/JIP-3/JSAP1. Interacts with SPAG9/MAPK8IP4/JIP4. Interacts with HDAC9. Interacts with ARRB2; the interaction enhances MAPK10 activation by MAP3K5. Interacts with SARM1. Interacts with JUND; interaction is inhibited in the presence of MEN1. Requires Mg(2+) as cofactor. Post-translationally, dually phosphorylated on Thr-221 and Tyr-223 by MAP2K4 and MAP2K7, which activates the enzyme. MAP2K7 shows a strong preference for Thr-221 while MAP2K4 phosphorylates Tyr-223 preferentially. Weakly autophosphorylated on threonine and tyrosine residues in vitro. In terms of processing, palmitoylation regulates subcellular location and axonal development. In terms of tissue distribution, specific to a subset of neurons in the nervous system. Present in the hippocampus and areas, cerebellum, striatum, brain stem, and weakly in the spinal cord. Very weak expression in testis and kidney.

It is found in the cytoplasm. The protein localises to the membrane. It localises to the nucleus. The protein resides in the mitochondrion. It catalyses the reaction L-seryl-[protein] + ATP = O-phospho-L-seryl-[protein] + ADP + H(+). It carries out the reaction L-threonyl-[protein] + ATP = O-phospho-L-threonyl-[protein] + ADP + H(+). Activated by threonine and tyrosine phosphorylation by two dual specificity kinases, MAP2K4 and MAP2K7. MAP2K7 phosphorylates MAPK10 on Thr-221 causing a conformational change and a large increase in Vmax. MAP2K4 then phosphorylates Tyr-223 resulting in a further increase in Vmax. Inhibited by dual specificity phosphatases, such as DUSP1. Inhibited by HDAC9. In terms of biological role, serine/threonine-protein kinase involved in various processes such as neuronal proliferation, differentiation, migration and programmed cell death. Extracellular stimuli such as pro-inflammatory cytokines or physical stress stimulate the stress-activated protein kinase/c-Jun N-terminal kinase (SAP/JNK) signaling pathway. In this cascade, two dual specificity kinases MAP2K4/MKK4 and MAP2K7/MKK7 phosphorylate and activate MAPK10/JNK3. In turn, MAPK10/JNK3 phosphorylates a number of transcription factors, primarily components of AP-1 such as JUN and ATF2 and thus regulates AP-1 transcriptional activity. Plays regulatory roles in the signaling pathways during neuronal apoptosis. Phosphorylates the neuronal microtubule regulator STMN2. Acts in the regulation of the amyloid-beta precursor protein/APP signaling during neuronal differentiation by phosphorylating APP. Also participates in neurite growth in spiral ganglion neurons. Phosphorylates the CLOCK-BMAL1 heterodimer and plays a role in the photic regulation of the circadian clock. Phosphorylates JUND and this phosphorylation is inhibited in the presence of MEN1. The sequence is that of Mitogen-activated protein kinase 10 (MAPK10) from Homo sapiens (Human).